The following is a 669-amino-acid chain: DNA ligase (669 aa).

Residues 34–38 (DAEYD), 83–84 (SL), and Glu114 each bind NAD(+). Residue Lys116 is the N6-AMP-lysine intermediate of the active site. The NAD(+) site is built by Arg137, Glu171, Lys287, and Lys311. Cys405, Cys408, Cys423, and Cys428 together coordinate Zn(2+). A BRCT domain is found at 591–669 (NIASYFAGKT…EERFLQELNK (79 aa)).

Belongs to the NAD-dependent DNA ligase family. LigA subfamily. Mg(2+) is required as a cofactor. It depends on Mn(2+) as a cofactor.

It carries out the reaction NAD(+) + (deoxyribonucleotide)n-3'-hydroxyl + 5'-phospho-(deoxyribonucleotide)m = (deoxyribonucleotide)n+m + AMP + beta-nicotinamide D-nucleotide.. DNA ligase that catalyzes the formation of phosphodiester linkages between 5'-phosphoryl and 3'-hydroxyl groups in double-stranded DNA using NAD as a coenzyme and as the energy source for the reaction. It is essential for DNA replication and repair of damaged DNA. The sequence is that of DNA ligase from Bacillus cytotoxicus (strain DSM 22905 / CIP 110041 / 391-98 / NVH 391-98).